Here is a 345-residue protein sequence, read N- to C-terminus: MSTPTPLSYKDAGVDIDAGNALVSNIKAAVKRTRRPEVMGNLGGFGALCELPTKYKQPVLVSGTDGVGTKLRLAIDYKKHDTVGIDLVAMCVNDLIVQGAEPLFFLDYYATGKLDVETATSVVNGIGEGCFQSGCALIGGETAEMPGMYEGEDYDLAGFCVGVVEKADIIDGSKVAAGDALIALASSGPHSNGYSLVRKVLEVSQADPQQDLNGKPLIQHLLEPTKIYVKSLLKLIEASDVHAMAHITGGGFWENIPRVLPENCKAVIQGDSWQWPAVFNWLMENGNIAEYEMYRTFNCGVGMIVALPADKVDAALALLAAEGEQAWLIGAIAPREGNEEQVEIL.

The protein belongs to the AIR synthase family.

The protein localises to the cytoplasm. It carries out the reaction 2-formamido-N(1)-(5-O-phospho-beta-D-ribosyl)acetamidine + ATP = 5-amino-1-(5-phospho-beta-D-ribosyl)imidazole + ADP + phosphate + H(+). The protein operates within purine metabolism; IMP biosynthesis via de novo pathway; 5-amino-1-(5-phospho-D-ribosyl)imidazole from N(2)-formyl-N(1)-(5-phospho-D-ribosyl)glycinamide: step 2/2. The polypeptide is Phosphoribosylformylglycinamidine cyclo-ligase (Shewanella sp. (strain MR-7)).